The sequence spans 180 residues: Small ribosomal subunit protein bS21c (180 aa).

Residues 1-79 (MASTSSLLNF…PSLAFSNTLY (79 aa)) constitute a chloroplast transit peptide. A compositionally biased stretch (low complexity) spans 14–45 (LFPSNTSLPPSSNPKFPNPNSLSSQQNSISIS). Disordered stretches follow at residues 14–49 (LFPS…SKKH) and 124–180 (NKQE…GAPF). The span at 130–147 (KRKHREAAKRNSRRRRGP) shows a compositional bias: basic residues. Positions 154 to 166 (GKEEATKVDKKED) are enriched in basic and acidic residues.

Component of the chloroplast small ribosomal subunit (SSU). Mature 70S chloroplast ribosomes of higher plants consist of a small (30S) and a large (50S) subunit. The 30S small subunit contains 1 molecule of ribosomal RNA (16S rRNA) and 24 different proteins. The 50S large subunit contains 3 rRNA molecules (23S, 5S and 4.5S rRNA) and 33 different proteins. bS21c binds directly to 16S ribosomal RNA.

It is found in the plastid. Its subcellular location is the chloroplast. Its function is as follows. Component of the chloroplast ribosome (chloro-ribosome), a dedicated translation machinery responsible for the synthesis of chloroplast genome-encoded proteins, including proteins of the transcription and translation machinery and components of the photosynthetic apparatus. The protein is Small ribosomal subunit protein bS21c (rps21) of Spinacia oleracea (Spinach).